The chain runs to 375 residues: MASKPEKRVASSVFITLAPPRRDVAVSEEVGQAACEARRARPWEMLPTKTPGAAVGRSPKTWTPSGKTNASLSGVTPQLSNGGCSLPPPSLNEEDLDLPPPPPPPSAYLPLPEEEPPVLPGKSLISDLEQLHLPPPPPPPPPQAPSKGSSVHPPPGHAIPSEEELPPPPEEPVTLPEREVSTDVCGFCHKPVSPRELAVEAMKRQYHAQCFTCRTCRRQLAGQRFYQKDGRPLCEPCYQDTLEKCGKCGEVVQEHVIRALGKAFHPPCFTCVTCARCISDESFALDSQNQVYCVADFYRKFAPVCSICENPIIPRDGKDAFKIECMGRNFHENCYRCEDCSVLLSVEPTDQGCYPLNDHLFCKPCHLKRSAAGCC.

The tract at residues 1–69 (MASKPEKRVA…KTWTPSGKTN (69 aa)) is filamin-binding. Residues 40-176 (ARPWEMLPTK…PPPEEPVTLP (137 aa)) are disordered. Residues 60–83 (KTWTPSGKTNASLSGVTPQLSNGG) are compositionally biased toward polar residues. Pro residues-rich tracts occupy residues 98–107 (LPPPPPPPSA) and 133–144 (LPPPPPPPPPQA). 3 consecutive LIM zinc-binding domains span residues 183–244 (DVCG…TLEK), 245–302 (CGKC…RKFA), and 303–372 (PVCS…RSAA). The segment at 278-375 (ISDESFALDS…HLKRSAAGCC (98 aa)) is FERMT2-binding.

As to quaternary structure, interacts with FERMT2, FLNA, FLNB and FLNC. Interacts with NKX2-5.

The protein resides in the cell junction. It localises to the focal adhesion. The protein localises to the cytoplasm. Its subcellular location is the cytoskeleton. It is found in the stress fiber. In terms of biological role, serves as an anchoring site for cell-ECM adhesion proteins and filamin-containing actin filaments. Is implicated in cell shape modulation (spreading) and motility. May participate in the regulation of filamin-mediated cross-linking and stabilization of actin filaments. May also regulate the assembly of filamin-containing signaling complexes that control actin assembly. Promotes dissociation of FLNA from ITGB3 and ITGB7. Promotes activation of integrins and regulates integrin-mediated cell-cell adhesion. In Mus musculus (Mouse), this protein is Filamin-binding LIM protein 1 (Fblim1).